A 539-amino-acid polypeptide reads, in one-letter code: Efflux pump roqT (539 aa).

The interval 1 to 25 (MEKEVATDPLPQEIPSDAPDEGGSL) is disordered. The next 12 membrane-spanning stretches (helical) occupy residues 36–56 (VSLT…VTII), 108–128 (LFLF…VGLI), 133–153 (IAGL…AQTV), 160–180 (VFTA…PPLG), 191–211 (WCFY…LFFF), 233–253 (IGSF…QWGG), 262–282 (RIIV…AVQI), 305–325 (WFAI…PIWF), 338–360 (VMNL…LVTI), 362–384 (GYYN…LLST), 395–415 (IGYQ…PFMV), and 502–522 (AFYV…ALEW).

This sequence belongs to the major facilitator superfamily. TCR/Tet family.

It localises to the membrane. Functionally, efflux pump; part of the gene cluster that mediates the biosynthesis of the mycotoxins roquefortine C and meleagrin. This Penicillium rubens (strain ATCC 28089 / DSM 1075 / NRRL 1951 / Wisconsin 54-1255) (Penicillium chrysogenum) protein is Efflux pump roqT.